The following is a 1020-amino-acid chain: Protein translocase subunit SecA (1020 aa).

ATP-binding positions include Gln99, 117 to 121 (GEGKT), and Asp633. The disordered stretch occupies residues 963–992 (NEQPSQEMAADEETQEESKIEENKPEPIVV). Over residues 978–987 (EESKIEENKP) the composition is skewed to basic and acidic residues. The Zn(2+) site is built by Cys1002, Cys1004, Cys1013, and Cys1014.

Belongs to the SecA family. Monomer and homodimer. Part of the essential Sec protein translocation apparatus which comprises SecA, SecYEG and auxiliary proteins SecDF. Other proteins may also be involved. It depends on Zn(2+) as a cofactor.

Its subcellular location is the cell inner membrane. It is found in the cytoplasm. The enzyme catalyses ATP + H2O + cellular proteinSide 1 = ADP + phosphate + cellular proteinSide 2.. Part of the Sec protein translocase complex. Interacts with the SecYEG preprotein conducting channel. Has a central role in coupling the hydrolysis of ATP to the transfer of proteins into and across the cell membrane, serving as an ATP-driven molecular motor driving the stepwise translocation of polypeptide chains across the membrane. The polypeptide is Protein translocase subunit SecA (Protochlamydia amoebophila (strain UWE25)).